A 114-amino-acid chain; its full sequence is N(4)-acetylcytidine amidohydrolase (114 aa).

Positions 8–93 (TFFEFLTPLV…ALIQEIYPNI (86 aa)) constitute an ASCH domain. K22 (proton acceptor) is an active-site residue. The active-site Nucleophile is the T25. The active-site Proton donor is E75.

It belongs to the N(4)-acetylcytidine amidohydrolase family.

It carries out the reaction N(4)-acetylcytidine + H2O = cytidine + acetate + H(+). The catalysed reaction is N(4)-acetyl-2'-deoxycytidine + H2O = 2'-deoxycytidine + acetate + H(+). The enzyme catalyses N(4)-acetylcytosine + H2O = cytosine + acetate + H(+). In terms of biological role, catalyzes the hydrolysis of N(4)-acetylcytidine (ac4C). The polypeptide is N(4)-acetylcytidine amidohydrolase (Vibrio cholerae serotype O1 (strain ATCC 39541 / Classical Ogawa 395 / O395)).